The chain runs to 361 residues: 3-dehydroquinate synthase (361 aa).

NAD(+) is bound by residues 104 to 108 (GVIGD), 128 to 129 (TT), Lys141, Lys150, and 168 to 171 (FLRT). 3 residues coordinate Zn(2+): Glu183, His246, and His263.

It belongs to the sugar phosphate cyclases superfamily. Dehydroquinate synthase family. Co(2+) serves as cofactor. Requires Zn(2+) as cofactor. It depends on NAD(+) as a cofactor.

It is found in the cytoplasm. The catalysed reaction is 7-phospho-2-dehydro-3-deoxy-D-arabino-heptonate = 3-dehydroquinate + phosphate. The protein operates within metabolic intermediate biosynthesis; chorismate biosynthesis; chorismate from D-erythrose 4-phosphate and phosphoenolpyruvate: step 2/7. Its function is as follows. Catalyzes the conversion of 3-deoxy-D-arabino-heptulosonate 7-phosphate (DAHP) to dehydroquinate (DHQ). The polypeptide is 3-dehydroquinate synthase (Opitutus terrae (strain DSM 11246 / JCM 15787 / PB90-1)).